A 241-amino-acid polypeptide reads, in one-letter code: 1-(5-phosphoribosyl)-5-[(5-phosphoribosylamino)methylideneamino] imidazole-4-carboxamide isomerase (241 aa).

The Proton acceptor role is filled by D10. The Proton donor role is filled by D129.

Belongs to the HisA/HisF family.

The protein resides in the cytoplasm. It carries out the reaction 1-(5-phospho-beta-D-ribosyl)-5-[(5-phospho-beta-D-ribosylamino)methylideneamino]imidazole-4-carboxamide = 5-[(5-phospho-1-deoxy-D-ribulos-1-ylimino)methylamino]-1-(5-phospho-beta-D-ribosyl)imidazole-4-carboxamide. The protein operates within amino-acid biosynthesis; L-histidine biosynthesis; L-histidine from 5-phospho-alpha-D-ribose 1-diphosphate: step 4/9. The protein is 1-(5-phosphoribosyl)-5-[(5-phosphoribosylamino)methylideneamino] imidazole-4-carboxamide isomerase of Salinispora arenicola (strain CNS-205).